The sequence spans 635 residues: Threonine--tRNA ligase (635 aa).

The 61-residue stretch at 1–61 folds into the TGS domain; it reads MINISFPDGS…ENDCKLRILT (61 aa). Residues 242–533 are catalytic; sequence DHRKLGKELD…LIEEYAGCFP (292 aa). 3 residues coordinate Zn(2+): Cys-333, His-384, and His-510.

It belongs to the class-II aminoacyl-tRNA synthetase family. Homodimer. It depends on Zn(2+) as a cofactor.

It localises to the cytoplasm. The enzyme catalyses tRNA(Thr) + L-threonine + ATP = L-threonyl-tRNA(Thr) + AMP + diphosphate + H(+). In terms of biological role, catalyzes the attachment of threonine to tRNA(Thr) in a two-step reaction: L-threonine is first activated by ATP to form Thr-AMP and then transferred to the acceptor end of tRNA(Thr). Also edits incorrectly charged L-seryl-tRNA(Thr). The sequence is that of Threonine--tRNA ligase from Rickettsia akari (strain Hartford).